A 449-amino-acid polypeptide reads, in one-letter code: D-inositol 3-phosphate glycosyltransferase (449 aa).

Position 43 (His43) interacts with 1D-myo-inositol 3-phosphate. UDP-N-acetyl-alpha-D-glucosamine-binding positions include Gln49–Pro50 and Gly57. Residues Asp54–Asn59, Lys112, Tyr145, Thr169, and Arg189 contribute to the 1D-myo-inositol 3-phosphate site. Arg263, Lys268, and Gln324 together coordinate UDP-N-acetyl-alpha-D-glucosamine. Tyr333, Arg334, and Ala336 together coordinate Mg(2+). Residues Glu346 and Glu354 each coordinate UDP-N-acetyl-alpha-D-glucosamine. Thr360 contacts Mg(2+).

Belongs to the glycosyltransferase group 1 family. MshA subfamily. Homodimer.

It carries out the reaction 1D-myo-inositol 3-phosphate + UDP-N-acetyl-alpha-D-glucosamine = 1D-myo-inositol 2-acetamido-2-deoxy-alpha-D-glucopyranoside 3-phosphate + UDP + H(+). Its function is as follows. Catalyzes the transfer of a N-acetyl-glucosamine moiety to 1D-myo-inositol 3-phosphate to produce 1D-myo-inositol 2-acetamido-2-deoxy-glucopyranoside 3-phosphate in the mycothiol biosynthesis pathway. In Segniliparus rotundus (strain ATCC BAA-972 / CDC 1076 / CIP 108378 / DSM 44985 / JCM 13578), this protein is D-inositol 3-phosphate glycosyltransferase.